We begin with the raw amino-acid sequence, 374 residues long: Probable neutral protease 2 homolog ARB_00849 (374 aa).

The signal sequence occupies residues 1–19 (MKFLTALSAIGALVATATA). Positions 20–189 (AAVPNTPAKQ…KKSRGTIDKR (170 aa)) are excised as a propeptide. 2 disulfide bridges follow: Cys197–Cys268 and Cys275–Cys293. His318 contacts Zn(2+). The active site involves Glu319. The Zn(2+) site is built by His322 and Asp333.

This sequence belongs to the peptidase M35 family. Zn(2+) serves as cofactor.

The protein resides in the secreted. It catalyses the reaction Preferential cleavage of bonds with hydrophobic residues in P1'. Also 3-Asn-|-Gln-4 and 8-Gly-|-Ser-9 bonds in insulin B chain.. Its function is as follows. Probable secreted metalloprotease that shows high activities on basic nuclear substrates such as histone and protamine. May be involved in virulence. The chain is Probable neutral protease 2 homolog ARB_00849 from Arthroderma benhamiae (strain ATCC MYA-4681 / CBS 112371) (Trichophyton mentagrophytes).